The following is a 508-amino-acid chain: Maturase K (508 aa).

This sequence belongs to the intron maturase 2 family. MatK subfamily.

It localises to the plastid. The protein resides in the chloroplast. In terms of biological role, usually encoded in the trnK tRNA gene intron. Probably assists in splicing its own and other chloroplast group II introns. This Verbena rigida (Tuberous vervain) protein is Maturase K.